A 578-amino-acid polypeptide reads, in one-letter code: A-type ATP synthase subunit A (578 aa).

228–235 is a binding site for ATP; that stretch reads GPFGSGKT.

This sequence belongs to the ATPase alpha/beta chains family. As to quaternary structure, has multiple subunits with at least A(3), B(3), C, D, E, F, G, I and proteolipid K(x).

The protein localises to the cell membrane. It carries out the reaction ATP + H2O + 4 H(+)(in) = ADP + phosphate + 5 H(+)(out). Its activity is regulated as follows. ATP hydrolysis stimulated by sulfite, ethanol, glycerol, magnesium and zinc ions, inhibited by diethylstilbestrol (DES) and less well by N,N-dicyclohexylcarbodiimide (DCCD). Functionally, component of the A-type ATP synthase that produces ATP from ADP in the presence of a proton gradient across the membrane. The A chain is the catalytic subunit. The protein is A-type ATP synthase subunit A of Methanosarcina mazei (strain ATCC BAA-159 / DSM 3647 / Goe1 / Go1 / JCM 11833 / OCM 88) (Methanosarcina frisia).